Consider the following 362-residue polypeptide: Histidine protein methyltransferase 1 homolog (362 aa).

The interval 28–89 is disordered; the sequence is KSQKGKEDKN…ACEKQPSLKP (62 aa). Residues 55 to 73 show a composition bias toward polar residues; sequence SLGSAASSEDTDSPPSTAD. Residues S62 and S67 each carry the phosphoserine modification. At H144 the chain carries Tele-methylhistidine. S-adenosyl-L-methionine is bound by residues 158–162, G185, and 206–208; these read IWECT and QDY. The Nuclear localization signal signature appears at 237–243; that stretch reads PAGKRQR. Residues 259–261 and S283 each bind S-adenosyl-L-methionine; that span reads GEW.

It belongs to the methyltransferase superfamily. METTL18 family. In terms of assembly, interacts with GRWD1 and members of the heat shock protein 90 and 70 families; these proteins may possibly be methylation substrates for the enzyme. Post-translationally, monomethylated at His-144 through automethylation. Automethylation at His-144 positively regulates the methyltransferase activity toward RPL3. Probably methylated on other residues.

Its subcellular location is the cytoplasm. It is found in the cytosol. The protein localises to the nucleus. The protein resides in the nucleolus. The enzyme catalyses L-histidyl-[protein] + S-adenosyl-L-methionine = N(tele)-methyl-L-histidyl-[protein] + S-adenosyl-L-homocysteine + H(+). Functionally, protein-L-histidine N-tele-methyltransferase that specifically monomethylates RPL3, thereby regulating translation elongation. Histidine methylation of RPL3 regulates translation elongation by slowing ribosome traversal on tyrosine codons: slower elongation provides enough time for proper folding of synthesized proteins and prevents cellular aggregation of tyrosine-rich proteins. This is Histidine protein methyltransferase 1 homolog from Rattus norvegicus (Rat).